The sequence spans 402 residues: CCA-adding enzyme (402 aa).

Positions 32 and 35 each coordinate ATP. CTP contacts are provided by Gly32 and Arg35. Residues Asp45 and Asp47 each coordinate Mg(2+). Arg116, Asp159, Arg162, Arg165, and Arg168 together coordinate ATP. CTP contacts are provided by Arg116, Asp159, Arg162, Arg165, and Arg168.

The protein belongs to the tRNA nucleotidyltransferase/poly(A) polymerase family. Bacterial CCA-adding enzyme type 3 subfamily. In terms of assembly, homodimer. Mg(2+) serves as cofactor.

The enzyme catalyses a tRNA precursor + 2 CTP + ATP = a tRNA with a 3' CCA end + 3 diphosphate. It catalyses the reaction a tRNA with a 3' CCA end + 2 CTP + ATP = a tRNA with a 3' CCACCA end + 3 diphosphate. In terms of biological role, catalyzes the addition and repair of the essential 3'-terminal CCA sequence in tRNAs without using a nucleic acid template. Adds these three nucleotides in the order of C, C, and A to the tRNA nucleotide-73, using CTP and ATP as substrates and producing inorganic pyrophosphate. tRNA 3'-terminal CCA addition is required both for tRNA processing and repair. Also involved in tRNA surveillance by mediating tandem CCA addition to generate a CCACCA at the 3' terminus of unstable tRNAs. While stable tRNAs receive only 3'-terminal CCA, unstable tRNAs are marked with CCACCA and rapidly degraded. The sequence is that of CCA-adding enzyme from Streptococcus pyogenes serotype M2 (strain MGAS10270).